A 643-amino-acid polypeptide reads, in one-letter code: MPIITLPDGAQRTYSTPVTIAEIAAEIGPGLAKAAIAGEVNGELVDTCIPISVNANINIITSKNKEGIDIIRHSFAHLLGHAIKQLYPDAKMAIGPVIENGFYYDIAYKDTFSLDDLNQIELRIKELIKQDYDVVVEEVSKEKARKTFLDRDEAYKVQIIDEIPDNETIKLYKHQEYIDMCRGPHVPNTKHLRAFSLMKVSGAYWRGDSNNEMLQRIYGTAWGSTKELEAYLLKIEEAEKRDHRKIGKKLDLFHTQEEAPGMIFWHPKGWSIYQVLESFIRETLILNDYKEIKTPQTVDRSLWEKSGHWDKFKEDMFTTTSENREYAIKPMNCPCHIQVFNEGLKSYRDLPIRLAEFGSCHRNEPSGALHGLMRVRNFVQDDAHIFCTEAQIQDEVSKFIDLVFDVYKAFGFESIIIKLSTRPTKRVGSDEIWDKSEKALADALNIKKFEWSYLPGEGAFYGPKIEFSLKDCIDRVWQCGTIQVDFSMPHRLGASYIDENSQKKVPVMLHRAILGSFERFIGILIEEYEGKFPPWLSPIQVIVIGITDRNSIKCKEISNLLMLRGYRATYDTRNEKVGLKIREHTLQRIPYLLIIGDKEQEEGTVSVRTMHGIDMGSMKLTEFQEIINEAISLKGNYKPVPKR.

One can recognise a TGS domain in the interval 1–61 (MPIITLPDGA…SVNANINIIT (61 aa)). A catalytic region spans residues 242 to 533 (DHRKIGKKLD…LIEEYEGKFP (292 aa)). Residues Cys-333, His-384, and His-510 each coordinate Zn(2+).

The protein belongs to the class-II aminoacyl-tRNA synthetase family. Homodimer. Zn(2+) serves as cofactor.

It localises to the cytoplasm. It catalyses the reaction tRNA(Thr) + L-threonine + ATP = L-threonyl-tRNA(Thr) + AMP + diphosphate + H(+). Catalyzes the attachment of threonine to tRNA(Thr) in a two-step reaction: L-threonine is first activated by ATP to form Thr-AMP and then transferred to the acceptor end of tRNA(Thr). Also edits incorrectly charged L-seryl-tRNA(Thr). The chain is Threonine--tRNA ligase from Prochlorococcus marinus (strain SARG / CCMP1375 / SS120).